Here is a 389-residue protein sequence, read N- to C-terminus: Probable nitrate transporter NarT (389 aa).

Transmembrane regions (helical) follow at residues 14-34, 45-65, 69-89, 97-117, 139-159, 161-181, 211-231, 246-266, 268-288, 294-314, 331-351, and 353-373; these read TLSLVVGFMAWSIIAPLMPFI, ISIILAIPVILGSVLRVPFGY, IVGAKWVFFTSFIVLLFPIFF, GMLMASGFFLGVGGAIFSVGV, GNIGTAVSSFLAPPIAGIIGW, TTVRSYLIIIALFALIMFIFG, WYFITFGAFVAFGIFLPNYLV, GVFIALATFLRPIGGILGDKF, AVKVLMIDFVVMIIGAIILGI, LFTVGCLTISICAGIGNGLIF, IVSMMGGLGGFFPPLVITYVA, and LTGSSHLAFIFLAVFGCIALF.

The protein belongs to the major facilitator superfamily. Nitrate/nitrite porter (TC 2.A.1.8) family.

It localises to the cell membrane. Its function is as follows. Probably required for nitrate uptake under anoxic conditions. Also possibly involved in excretion of nitrite produced by the dissimilatory reduction of nitrate. This Staphylococcus aureus (strain bovine RF122 / ET3-1) protein is Probable nitrate transporter NarT (narT).